The following is a 283-amino-acid chain: Elongation factor Ts (283 aa).

Residues 80–83 (TDFV) form an involved in Mg(2+) ion dislocation from EF-Tu region.

This sequence belongs to the EF-Ts family.

The protein localises to the cytoplasm. Associates with the EF-Tu.GDP complex and induces the exchange of GDP to GTP. It remains bound to the aminoacyl-tRNA.EF-Tu.GTP complex up to the GTP hydrolysis stage on the ribosome. The polypeptide is Elongation factor Ts (Salmonella paratyphi A (strain ATCC 9150 / SARB42)).